We begin with the raw amino-acid sequence, 142 residues long: Hemoglobin subunit alpha (142 aa).

Residues 2–142 (VLSAADKGNV…VSTVLTSKYR (141 aa)) enclose the Globin domain. Residue Ser-4 is modified to Phosphoserine. Lys-8 and Lys-12 each carry N6-succinyllysine. An N6-acetyllysine; alternate modification is found at Lys-17. At Lys-17 the chain carries N6-succinyllysine; alternate. Residue Tyr-25 is modified to Phosphotyrosine. Position 36 is a phosphoserine (Ser-36). Lys-41 carries the N6-succinyllysine modification. At Ser-50 the chain carries Phosphoserine. An O2-binding site is contributed by His-59. Heme b is bound at residue His-88. Position 103 is a phosphoserine (Ser-103). A Phosphothreonine modification is found at Thr-109. Position 125 is a phosphoserine (Ser-125). 2 positions are modified to phosphothreonine: Thr-135 and Thr-138. At Ser-139 the chain carries Phosphoserine.

Belongs to the globin family. In terms of assembly, heterotetramer of two alpha chains and two beta chains. In terms of tissue distribution, red blood cells.

Involved in oxygen transport from the lung to the various peripheral tissues. Its function is as follows. Hemopressin acts as an antagonist peptide of the cannabinoid receptor CNR1. Hemopressin-binding efficiently blocks cannabinoid receptor CNR1 and subsequent signaling. The polypeptide is Hemoglobin subunit alpha (HBA) (Bos gaurus frontalis (Domestic gayal)).